Reading from the N-terminus, the 352-residue chain is Protein-glutamate methylesterase/protein-glutamine glutaminase (352 aa).

Positions 5–122 (RAIVIDDSAF…SLDIRNVEDE (118 aa)) constitute a Response regulatory domain. Aspartate 56 carries the post-translational modification 4-aspartylphosphate. The CheB-type methylesterase domain occupies 163–352 (RSIVSIGTST…IPSLIVKQLT (190 aa)). Catalysis depends on residues serine 171, histidine 198, and aspartate 294.

This sequence belongs to the CheB family. In terms of processing, phosphorylated by CheA. Phosphorylation of the N-terminal regulatory domain activates the methylesterase activity.

It is found in the cytoplasm. It carries out the reaction [protein]-L-glutamate 5-O-methyl ester + H2O = L-glutamyl-[protein] + methanol + H(+). It catalyses the reaction L-glutaminyl-[protein] + H2O = L-glutamyl-[protein] + NH4(+). In terms of biological role, involved in chemotaxis. Part of a chemotaxis signal transduction system that modulates chemotaxis in response to various stimuli. Catalyzes the demethylation of specific methylglutamate residues introduced into the chemoreceptors (methyl-accepting chemotaxis proteins or MCP) by CheR. Also mediates the irreversible deamidation of specific glutamine residues to glutamic acid. In Oceanobacillus iheyensis (strain DSM 14371 / CIP 107618 / JCM 11309 / KCTC 3954 / HTE831), this protein is Protein-glutamate methylesterase/protein-glutamine glutaminase.